The primary structure comprises 141 residues: HTH-type transcriptional repressor NsrR (141 aa).

The HTH rrf2-type domain occupies 2 to 129 (QLTSFTDYGL…DNYTLADLVE (128 aa)). The H-T-H motif DNA-binding region spans 28–51 (ISEVTEVYGVSRNHMVKIINQLSR). [2Fe-2S] cluster-binding residues include cysteine 91, cysteine 96, and cysteine 102.

Requires [2Fe-2S] cluster as cofactor.

In terms of biological role, nitric oxide-sensitive repressor of genes involved in protecting the cell against nitrosative stress. May require iron for activity. This chain is HTH-type transcriptional repressor NsrR, found in Klebsiella pneumoniae subsp. pneumoniae (strain ATCC 700721 / MGH 78578).